A 288-amino-acid chain; its full sequence is UPF0494 membrane protein C212.04c (288 aa).

Transmembrane regions (helical) follow at residues 107 to 127 (WVLL…KFKI), 144 to 164 (IWGP…AFNY), 174 to 194 (PLIS…SVII), and 198 to 218 (IAGV…GVIA).

This sequence belongs to the UPF0494 family.

It is found in the cytoplasm. It localises to the endoplasmic reticulum. Its subcellular location is the membrane. In Schizosaccharomyces pombe (strain 972 / ATCC 24843) (Fission yeast), this protein is UPF0494 membrane protein C212.04c.